Here is a 442-residue protein sequence, read N- to C-terminus: Myb family transcription factor PHL13 (442 aa).

One can recognise an HTH myb-type domain in the interval 235 to 295; the sequence is MTSKQRMRWT…HLQKYRTARY (61 aa). The H-T-H motif DNA-binding region spans 266–291; sequence PKAVLKLINSPGLTVYHVKSHLQKYR. Residues 329 to 349 are coiled coil; the sequence is TEALRLQMKVQKQLHEQLEIQ. Residues 342-347 carry the LHEQLE motif; that stretch reads LHEQLE. A compositionally biased stretch (basic and acidic residues) spans 370 to 380; it reads QQKMQENKKDS. The tract at residues 370–442 is disordered; sequence QQKMQENKKD…TSNRKRVRED (73 aa). Residues 395–434 are compositionally biased toward polar residues; it reads SPNLSQPFLHKATNSEPSITQKLQNGSSTMDQSESTSGTS.

Belongs to the MYB-CC family.

It is found in the nucleus. The protein is Myb family transcription factor PHL13 of Arabidopsis thaliana (Mouse-ear cress).